Reading from the N-terminus, the 123-residue chain is Small ribosomal subunit protein uS12cz/uS12cy (123 aa).

The protein belongs to the universal ribosomal protein uS12 family. As to quaternary structure, part of the 30S ribosomal subunit.

It is found in the plastid. The protein resides in the chloroplast. With S4 and S5 plays an important role in translational accuracy. Located at the interface of the 30S and 50S subunits. The polypeptide is Small ribosomal subunit protein uS12cz/uS12cy (rps12-A) (Psilotum nudum (Whisk fern)).